The following is a 454-amino-acid chain: Probable succinate-semialdehyde dehydrogenase [NADP(+)] (454 aa).

NADP(+)-binding positions include 130–131, 154–157, and 206–207; these read WN, KHAS, and GS. Glu-228 acts as the Proton acceptor in catalysis. Leu-229 serves as a coordination point for NADP(+). Catalysis depends on Cys-262, which acts as the Nucleophile. Glu-359 is a binding site for NADP(+).

It belongs to the aldehyde dehydrogenase family.

It carries out the reaction succinate semialdehyde + NADP(+) + H2O = succinate + NADPH + 2 H(+). It functions in the pathway amino-acid degradation; 4-aminobutanoate degradation. Its function is as follows. Catalyzes the NADP(+) dependent oxidation of succinate semialdehyde to succinate. The chain is Probable succinate-semialdehyde dehydrogenase [NADP(+)] (gabD) from Synechocystis sp. (strain ATCC 27184 / PCC 6803 / Kazusa).